Reading from the N-terminus, the 540-residue chain is MSRQFTYKSGAAAKGAFSGCSVVLSGSSSPSYRAGSKGLSGGFGSRSLYSLGCARSVSFNMASGSGRAGGYGFSRGRASGFAGSMFGSVALGPMCPSLCPPGGIHQVIVNKSLLAPLNVELDPEIQKVCAQEREQIKALNNKFASFIDKVRFLEQQNQVLGTKWELLQQQDLDNCKNNLEPILEGYISNLRKQLEMLSGDRVRLDSELRSMRDVVEDYKKRYEEEINKRTTAENEFVVLKKDVDAAYMSKVELQAKVDALEREIKFFTCLYEGEIAQMQSHISDTSVILSMDNNRNLDLNSIIAEVRAQYEDIALKSKAEAEALYQTKFQELQLAAGRHGDDLKHTKNEIAELTRLIQRLRSETESVKKQCSNLETAITDAEQRGHCALKDAQAKLDELEAALLQAKEELARMMCEYQELMSTKLALDIEIATYRKLLEGEECRMSGEYTNSVSISVISSSMAGTAGTGAGFGYSGSGTYGYRPSSVGGGYGFLLGGCVTGSGNCSPRGEAKTRLGSTSEIKDLLGKTPALSSPTKKTPR.

Residues 1–131 form a head region; that stretch reads MSRQFTYKSG…DPEIQKVCAQ (131 aa). The coil 1A stretch occupies residues 132-167; that stretch reads EREQIKALNNKFASFIDKVRFLEQQNQVLGTKWELL. Residues 132–445 enclose the IF rod domain; the sequence is EREQIKALNN…KLLEGEECRM (314 aa). A linker 1 region spans residues 168 to 186; it reads QQQDLDNCKNNLEPILEGY. The tract at residues 187-278 is coil 1B; that stretch reads ISNLRKQLEM…CLYEGEIAQM (92 aa). Residues 279-302 are linker 12; the sequence is QSHISDTSVILSMDNNRNLDLNSI. The segment at 303-441 is coil 2; sequence IAEVRAQYED…ATYRKLLEGE (139 aa). A tail region spans residues 442–540; the sequence is ECRMSGEYTN…LSSPTKKTPR (99 aa). Residues 509-540 are disordered; the sequence is GEAKTRLGSTSEIKDLLGKTPALSSPTKKTPR. Residues 530–540 are compositionally biased toward polar residues; the sequence is ALSSPTKKTPR.

It belongs to the intermediate filament family. In terms of assembly, heterotetramer of two type I and two type II keratins.

Its function is as follows. Has a role in hair formation. Specific component of keratin intermediate filaments in the inner root sheath (IRS) of the hair follicle. The sequence is that of Keratin, type II cytoskeletal 73 (KRT73) from Bos taurus (Bovine).